A 225-amino-acid chain; its full sequence is Uracil-DNA glycosylase (225 aa).

Aspartate 64 (proton acceptor) is an active-site residue.

It belongs to the uracil-DNA glycosylase (UDG) superfamily. UNG family.

The protein localises to the cytoplasm. It carries out the reaction Hydrolyzes single-stranded DNA or mismatched double-stranded DNA and polynucleotides, releasing free uracil.. Excises uracil residues from the DNA which can arise as a result of misincorporation of dUMP residues by DNA polymerase or due to deamination of cytosine. The sequence is that of Uracil-DNA glycosylase from Lachnoclostridium phytofermentans (strain ATCC 700394 / DSM 18823 / ISDg) (Clostridium phytofermentans).